Consider the following 66-residue polypeptide: Large ribosomal subunit protein bL32 (66 aa).

This sequence belongs to the bacterial ribosomal protein bL32 family.

In Rickettsia conorii (strain ATCC VR-613 / Malish 7), this protein is Large ribosomal subunit protein bL32.